Consider the following 1185-residue polypeptide: Mucin-6 (1185 aa).

Disulfide bonds link cysteine 1/cysteine 132 and cysteine 23/cysteine 168. Positions 1-169 (CSTWGGGHFS…KMDDPSEICL (169 aa)) constitute a VWFD 1 domain. Asparagine 223 carries N-linked (GlcNAc...) (complex) asparagine glycosylation. Residues 257 to 312 (CSANQIYEECGSPCIKTCSNPEYSCSSHCTYGCFCPEGTVLDDISKNRTCVHLEQC) enclose the TIL 1 domain. Residues 350 to 534 (GRCSLEGGSF…AMERETDPCA (185 aa)) enclose the VWFD 2 domain. 2 cysteine pairs are disulfide-bonded: cysteine 352-cysteine 488 and cysteine 374-cysteine 533. 2 TIL domains span residues 619-676 (CTGN…KSHC) and 737-782 (GATC…PEEC). The VWFD 3 domain maps to 821 to 993 (STCNLYGEGH…NSWKENPLCG (173 aa)). Disulfide bonds link cysteine 823–cysteine 957, cysteine 845–cysteine 992, cysteine 854–cysteine 954, and cysteine 872–cysteine 879. Asparagine 930 carries N-linked (GlcNAc...) (complex) asparagine glycosylation. Residues 1160-1178 (PTATQPTSPSTSSASTVLT) are compositionally biased toward low complexity. Residues 1160–1185 (PTATQPTSPSTSSASTVLTETTNPPV) form a disordered region.

Multimer; disulfide-linked. N-glycosylated with N-acetylglucosamine (6.7%), N-acetylgalactosamine (0.6%), galactose (1.8%), mannose (4.6%), N-acetylneuraminic acid (1.0%) and sulfate-containing glycans (0.7%).

The protein resides in the secreted. Its function is as follows. Ovomucin, the glycoprotein responsible for the gel properties of egg white, is composed for 2 subunits, alpha-ovomucin/MUC5B and beta-ovomucin/MUC6. The chain is Mucin-6 (MUC6) from Gallus gallus (Chicken).